The sequence spans 733 residues: MTFPEADILLKSGECAGQTMLDTMEAPGHSRQLLLQLNNQRTKGFLCDVIIVVQNALFRAHKNVLAASSAYLKSLVVHDNLLNLDHDMVSPAVFRLVLDFIYTGRLADGAEAAAAAAVAPGAEPSLGAVLAAASYLQIPDLVALCKKRLKRHGKYCHLRGGGGGGGGYAPYGRPGRGLRAATPVIQACYPSPVGPPPPPAAEPPSGPEAAVNTHCAELYASGPGPAAALCASERRCSPLCGLDLSKKSPPGSAAPERPLAERELPPRPDSPPSAGPAAYKEPPLALPSLPPLPFQKLEEAAPPSDPFRGGSGSPGPEPPGRPDGPSLLYRWMKHEPGLGSYGDELGRERGSPSERCEERGGDAAVSPGGPPLGLAPPPRYPGSLDGPGAGGDGDDYKSSSEETGSSEDPSPPGGHLEGYPCPHLAYGEPESFGDNLYVCIPCGKGFPSSEQLNAHVEAHVEEEEALYGRAEAAEVAAGAAGLGPPFGGGGDKVAGAPGGLGELLRPYRCASCDKSYKDPATLRQHEKTHWLTRPYPCTICGKKFTQRGTMTRHMRSHLGLKPFACDACGMRFTRQYRLTEHMRIHSGEKPYECQVCGGKFAQQRNLISHMKMHAVGGAAGAAGALAGLGGLPGVPGPDGKGKLDFPEGVFAVARLTAEQLSLKQQDKAAAAELLAQTTHFLHDPKVALESLYPLAKFTAELGLSPDKAAEVLSQGAHLAAGPDGRTIDRFSPT.

The BTB domain maps to 47 to 110 (CDVIIVVQNA…IYTGRLADGA (64 aa)). The interval 154–315 (KYCHLRGGGG…PFRGGSGSPG (162 aa)) is mediates HDAC-dependent transcriptional repression. Arg-159 bears the Omega-N-methylarginine mark. The interval 189–209 (YPSPVGPPPPPAAEPPSGPEA) is disordered. Over residues 192–206 (PVGPPPPPAAEPPSG) the composition is skewed to pro residues. The residue at position 237 (Ser-237) is a Phosphoserine. The tract at residues 241 to 247 (GLDLSKK) is interaction with CTBP1. Positions 241–421 (GLDLSKKSPP…PGGHLEGYPC (181 aa)) are disordered. Position 248 is a phosphoserine (Ser-248). The segment covering 284–293 (LALPSLPPLP) has biased composition (pro residues). The residue at position 333 (Lys-333) is an N6-acetyllysine; alternate. Residue Lys-333 forms a Glycyl lysine isopeptide (Lys-Gly) (interchain with G-Cter in SUMO); alternate linkage. Basic and acidic residues predominate over residues 344-361 (ELGRERGSPSERCEERGG). Ser-366 is modified (phosphoserine). Over residues 368 to 380 (GGPPLGLAPPPRY) the composition is skewed to pro residues. 5 C2H2-type zinc fingers span residues 439–459 (CIPC…VEAH), 509–529 (CASC…EKTH), 537–557 (CTIC…MRSH), 565–585 (CDAC…MRIH), and 593–613 (CQVC…MKMH). Residue Ser-704 is modified to Phosphoserine.

The protein belongs to the krueppel C2H2-type zinc-finger protein family. Hic subfamily. In terms of assembly, self-associates. Interacts with HIC2. Interacts with CTBP1 and CTBP2. Interacts with TCF7L2 and ARID1A. Interacts with MTA1 and MBD3; indicative for an association with the NuRD complex. Interacts with SIRT1. Acetylated on several residues, including Lys-333. Lys-333 is deacetylated by SIRT1. In terms of processing, sumoylated on Lys-333 by a PIAS family member, which enhances interaction with MTA1, positively regulates transcriptional repression activity and is enhanced by HDAC4. Ubiquitously expressed with highest levels found in lung, colon, prostate, thymus, testis and ovary. Expression is absent or decreased in many tumor cells.

It is found in the nucleus. In terms of biological role, transcriptional repressor. Recognizes and binds to the consensus sequence '5-[CG]NG[CG]GGGCA[CA]CC-3'. May act as a tumor suppressor. Involved in development of head, face, limbs and ventral body wall. Involved in down-regulation of SIRT1 and thereby is involved in regulation of p53/TP53-dependent apoptotic DNA-damage responses. The specific target gene promoter association seems to be depend on corepressors, such as CTBP1 or CTBP2 and MTA1. In cooperation with MTA1 (indicative for an association with the NuRD complex) represses transcription from CCND1/cyclin-D1 and CDKN1C/p57Kip2 specifically in quiescent cells. Involved in regulation of the Wnt signaling pathway probably by association with TCF7L2 and preventing TCF7L2 and CTNNB1 association with promoters of TCF-responsive genes. Seems to repress transcription from E2F1 and ATOH1 which involves ARID1A, indicative for the participation of a distinct SWI/SNF-type chromatin-remodeling complex. Probably represses transcription of ACKR3, FGFBP1 and EFNA1. The protein is Hypermethylated in cancer 1 protein (HIC1) of Homo sapiens (Human).